The sequence spans 394 residues: 3-amino-4-hydroxybenzoate 2-monooxygenase (394 aa).

Residues Ala16 and Arg109 each contribute to the FAD site. Residue Tyr214 is the Proton acceptor of the active site. Residue Asp287 coordinates FAD.

It belongs to the 6-hydroxynicotinate 3-monooxygenase family. Requires FAD as cofactor.

The catalysed reaction is 3-amino-4-hydroxybenzoate + NADPH + O2 + H(+) = 3-amino-2,4-dihydroxybenzoate + NADP(+) + H2O. Its pathway is antibiotic biosynthesis. Functionally, part of a gene cluster involved in the biosynthesis of cremeomycin, a light-sensitive o-diazoquinone with antibacterial and antiproliferative effects. Catalyzes the hydroxylation of 3-amino-4-hydroxybenzoate (3,4-AHBA) to 3-amino-2,4-dihydroxybenzoate (3,2,4-ADHBA). This Streptomyces cremeus protein is 3-amino-4-hydroxybenzoate 2-monooxygenase.